The chain runs to 338 residues: Lipoate-protein ligase A (338 aa).

Residues 29 to 216 (PATQRVLFLW…AFFAHYGERV (188 aa)) form the BPL/LPL catalytic domain. Residues Arg-71, 76–79 (GAVF), and Lys-134 each bind ATP. Lys-134 provides a ligand contact to (R)-lipoate.

The protein belongs to the LplA family. Monomer.

The protein localises to the cytoplasm. The enzyme catalyses L-lysyl-[lipoyl-carrier protein] + (R)-lipoate + ATP = N(6)-[(R)-lipoyl]-L-lysyl-[lipoyl-carrier protein] + AMP + diphosphate + H(+). Its pathway is protein modification; protein lipoylation via exogenous pathway; protein N(6)-(lipoyl)lysine from lipoate: step 1/2. The protein operates within protein modification; protein lipoylation via exogenous pathway; protein N(6)-(lipoyl)lysine from lipoate: step 2/2. In terms of biological role, catalyzes both the ATP-dependent activation of exogenously supplied lipoate to lipoyl-AMP and the transfer of the activated lipoyl onto the lipoyl domains of lipoate-dependent enzymes. The sequence is that of Lipoate-protein ligase A from Escherichia coli O1:K1 / APEC.